Here is a 265-residue protein sequence, read N- to C-terminus: Arcelin-2 (265 aa).

The signal sequence occupies residues 1–21 (MASSNLLTLALFLVLLTHANS). Asparagine 33 and asparagine 89 each carry an N-linked (GlcNAc...) asparagine glycan. Cysteine 165 and cysteine 201 form a disulfide bridge.

Belongs to the leguminous lectin family.

Its function is as follows. Seed storage. This carbohydrate-binding lectin has toxic effects on bean bruchid pests. Antibiosis properties of legume lectins are proposed to be due to the lysis of epithelial cells of the intestine by binding to the carbohydrate moieties of these proteins. The sequence is that of Arcelin-2 (ARC2) from Phaseolus vulgaris (Kidney bean).